The primary structure comprises 162 residues: NADH-quinone oxidoreductase subunit I (162 aa).

2 consecutive 4Fe-4S ferredoxin-type domains span residues 52 to 82 and 93 to 122; these read LRRY…IEAG and TRYD…EGPN. Residues C62, C65, C68, C72, C102, C105, C108, and C112 each contribute to the [4Fe-4S] cluster site.

The protein belongs to the complex I 23 kDa subunit family. As to quaternary structure, NDH-1 is composed of 14 different subunits. Subunits NuoA, H, J, K, L, M, N constitute the membrane sector of the complex. Requires [4Fe-4S] cluster as cofactor.

The protein resides in the cell inner membrane. The enzyme catalyses a quinone + NADH + 5 H(+)(in) = a quinol + NAD(+) + 4 H(+)(out). NDH-1 shuttles electrons from NADH, via FMN and iron-sulfur (Fe-S) centers, to quinones in the respiratory chain. The immediate electron acceptor for the enzyme in this species is believed to be ubiquinone. Couples the redox reaction to proton translocation (for every two electrons transferred, four hydrogen ions are translocated across the cytoplasmic membrane), and thus conserves the redox energy in a proton gradient. This is NADH-quinone oxidoreductase subunit I from Methylocella silvestris (strain DSM 15510 / CIP 108128 / LMG 27833 / NCIMB 13906 / BL2).